Consider the following 130-residue polypeptide: Small ribosomal subunit protein uS9 (130 aa).

It belongs to the universal ribosomal protein uS9 family.

This is Small ribosomal subunit protein uS9 from Pseudomonas entomophila (strain L48).